Consider the following 57-residue polypeptide: Stress response protein (57 aa).

Positions 6–10 (RKERR) match the Nuclear localization signal motif.

As to expression, mesophyll protoplasts.

The protein resides in the nucleus. Functionally, stress response. May play a role in the reentering of protoplasts into the cell cycle. This chain is Stress response protein, found in Nicotiana sylvestris (Wood tobacco).